Here is a 380-residue protein sequence, read N- to C-terminus: MSTTVGQVIRCKAAVAWEAGKPLVMEEVDVAPPQKMEVRLKILYTSLCHTDVYFWEAKGQNPVFPRILGHEAAGIVESVGEGVTELGPGDHVLPVFTGECKDCAHCKSEESNMCSLLRINTDRGVMINDGQSRFSINGKPIYHFVGTSTFSEYTVVHVGCVAKINPLAPLDKVCVLSCGISTGLGATLNVAKPTKGSSVAIFGLGAVGLAAAEGARIAGASRIIGVDLNASRFEQAKKFGVTEFVNPKDYSKPVQEVIAEMTDGGVDRSVECTGHIDAMISAFECVHDGWGVAVLVGVPHKEAVFKTHPMNLLNERTLKGTFFGNYKPRSDIPSVVEKYMNKELELEKFITHTLPFAEINKAFDLMLKGEGLRCIITMED.

Residues Cys48, Thr50, His70, Cys100, Cys103, Cys106, Cys114, and Cys178 each coordinate Zn(2+). Residues Thr50 and His70 each contribute to the an alcohol site. Thr50 serves as a coordination point for NAD(+). NAD(+)-binding positions include 203–208 (GLGAVG), Asp227, Arg232, Thr273, Val296, 296–298 (VGV), Phe323, and Arg373.

It belongs to the zinc-containing alcohol dehydrogenase family. As to quaternary structure, homodimer. Homotetramer. The cofactor is Zn(2+).

It is found in the cytoplasm. The enzyme catalyses a primary alcohol + NAD(+) = an aldehyde + NADH + H(+). It catalyses the reaction a secondary alcohol + NAD(+) = a ketone + NADH + H(+). The protein is Alcohol dehydrogenase 1 (ADH1) of Solanum tuberosum (Potato).